Reading from the N-terminus, the 127-residue chain is Aspartate 1-decarboxylase (127 aa).

Ser-25 serves as the catalytic Schiff-base intermediate with substrate; via pyruvic acid. Residue Ser-25 is modified to Pyruvic acid (Ser). Substrate is bound at residue Thr-57. Tyr-58 acts as the Proton donor in catalysis. Substrate is bound at residue 73–75 (GAA).

Belongs to the PanD family. In terms of assembly, heterooctamer of four alpha and four beta subunits. Requires pyruvate as cofactor. Post-translationally, is synthesized initially as an inactive proenzyme, which is activated by self-cleavage at a specific serine bond to produce a beta-subunit with a hydroxyl group at its C-terminus and an alpha-subunit with a pyruvoyl group at its N-terminus.

The protein localises to the cytoplasm. The catalysed reaction is L-aspartate + H(+) = beta-alanine + CO2. It participates in cofactor biosynthesis; (R)-pantothenate biosynthesis; beta-alanine from L-aspartate: step 1/1. Functionally, catalyzes the pyruvoyl-dependent decarboxylation of aspartate to produce beta-alanine. The protein is Aspartate 1-decarboxylase of Bacillus licheniformis (strain ATCC 14580 / DSM 13 / JCM 2505 / CCUG 7422 / NBRC 12200 / NCIMB 9375 / NCTC 10341 / NRRL NRS-1264 / Gibson 46).